The chain runs to 98 residues: MSMVYINIFMAFTVSLMGLLVYRSHLMSSLLCLEGMMLSLFIMMTMAILNNHFTLASMAPIILLVFAACEAALGLSLLVMVSNTYGTDYVQNLNLLQC.

Helical transmembrane passes span 1-21 (MSMV…GLLV), 29-49 (SLLC…MAIL), and 61-81 (IILL…LVMV).

This sequence belongs to the complex I subunit 4L family. Core subunit of respiratory chain NADH dehydrogenase (Complex I) which is composed of 45 different subunits.

The protein resides in the mitochondrion inner membrane. It carries out the reaction a ubiquinone + NADH + 5 H(+)(in) = a ubiquinol + NAD(+) + 4 H(+)(out). Functionally, core subunit of the mitochondrial membrane respiratory chain NADH dehydrogenase (Complex I) which catalyzes electron transfer from NADH through the respiratory chain, using ubiquinone as an electron acceptor. Part of the enzyme membrane arm which is embedded in the lipid bilayer and involved in proton translocation. This Lynx canadensis (Canada lynx) protein is NADH-ubiquinone oxidoreductase chain 4L (MT-ND4L).